A 351-amino-acid chain; its full sequence is Methionine import ATP-binding protein MetN (351 aa).

The ABC transporter domain maps to I2 to T241. G38–S45 serves as a coordination point for ATP.

This sequence belongs to the ABC transporter superfamily. Methionine importer (TC 3.A.1.24) family. The complex is composed of two ATP-binding proteins (MetN), two transmembrane proteins (MetI) and a solute-binding protein (MetQ).

The protein resides in the cell inner membrane. The enzyme catalyses L-methionine(out) + ATP + H2O = L-methionine(in) + ADP + phosphate + H(+). It catalyses the reaction D-methionine(out) + ATP + H2O = D-methionine(in) + ADP + phosphate + H(+). In terms of biological role, part of the ABC transporter complex MetNIQ involved in methionine import. Responsible for energy coupling to the transport system. This Coxiella burnetii (strain RSA 493 / Nine Mile phase I) protein is Methionine import ATP-binding protein MetN.